Reading from the N-terminus, the 534-residue chain is Peptide chain release factor 3 (534 aa).

The region spanning 9 to 278 is the tr-type G domain; sequence ARRRTFAIIS…FFVEHAPPPQ (270 aa). GTP is bound by residues 18–25, 86–90, and 140–143; these read SHPDAGKT, DTPGH, and NKLD.

Belongs to the TRAFAC class translation factor GTPase superfamily. Classic translation factor GTPase family. PrfC subfamily.

Its subcellular location is the cytoplasm. In terms of biological role, increases the formation of ribosomal termination complexes and stimulates activities of RF-1 and RF-2. It binds guanine nucleotides and has strong preference for UGA stop codons. It may interact directly with the ribosome. The stimulation of RF-1 and RF-2 is significantly reduced by GTP and GDP, but not by GMP. The chain is Peptide chain release factor 3 from Xanthomonas axonopodis pv. citri (strain 306).